Here is a 336-residue protein sequence, read N- to C-terminus: Holliday junction branch migration complex subunit RuvB (336 aa).

The interval Ala-4–Tyr-184 is large ATPase domain (RuvB-L). Residues Ile-23, Arg-24, Gly-65, Lys-68, Thr-69, Thr-70, Glu-131–Tyr-133, Arg-174, Tyr-184, and Arg-221 each bind ATP. Mg(2+) is bound at residue Thr-69. The tract at residues Gln-185 to Asn-255 is small ATPAse domain (RuvB-S). The interval Ala-258 to Pro-336 is head domain (RuvB-H). DNA is bound by residues Arg-294, Arg-313, and Arg-318.

The protein belongs to the RuvB family. Homohexamer. Forms an RuvA(8)-RuvB(12)-Holliday junction (HJ) complex. HJ DNA is sandwiched between 2 RuvA tetramers; dsDNA enters through RuvA and exits via RuvB. An RuvB hexamer assembles on each DNA strand where it exits the tetramer. Each RuvB hexamer is contacted by two RuvA subunits (via domain III) on 2 adjacent RuvB subunits; this complex drives branch migration. In the full resolvosome a probable DNA-RuvA(4)-RuvB(12)-RuvC(2) complex forms which resolves the HJ.

Its subcellular location is the cytoplasm. It carries out the reaction ATP + H2O = ADP + phosphate + H(+). In terms of biological role, the RuvA-RuvB-RuvC complex processes Holliday junction (HJ) DNA during genetic recombination and DNA repair, while the RuvA-RuvB complex plays an important role in the rescue of blocked DNA replication forks via replication fork reversal (RFR). RuvA specifically binds to HJ cruciform DNA, conferring on it an open structure. The RuvB hexamer acts as an ATP-dependent pump, pulling dsDNA into and through the RuvAB complex. RuvB forms 2 homohexamers on either side of HJ DNA bound by 1 or 2 RuvA tetramers; 4 subunits per hexamer contact DNA at a time. Coordinated motions by a converter formed by DNA-disengaged RuvB subunits stimulates ATP hydrolysis and nucleotide exchange. Immobilization of the converter enables RuvB to convert the ATP-contained energy into a lever motion, pulling 2 nucleotides of DNA out of the RuvA tetramer per ATP hydrolyzed, thus driving DNA branch migration. The RuvB motors rotate together with the DNA substrate, which together with the progressing nucleotide cycle form the mechanistic basis for DNA recombination by continuous HJ branch migration. Branch migration allows RuvC to scan DNA until it finds its consensus sequence, where it cleaves and resolves cruciform DNA. The sequence is that of Holliday junction branch migration complex subunit RuvB from Escherichia coli O17:K52:H18 (strain UMN026 / ExPEC).